Consider the following 217-residue polypeptide: Thymidylate kinase (217 aa).

7 to 14 (GIEGTGKT) contacts ATP.

The protein belongs to the thymidylate kinase family.

It carries out the reaction dTMP + ATP = dTDP + ADP. Its function is as follows. Phosphorylation of dTMP to form dTDP in both de novo and salvage pathways of dTTP synthesis. The polypeptide is Thymidylate kinase (Maridesulfovibrio salexigens (strain ATCC 14822 / DSM 2638 / NCIMB 8403 / VKM B-1763) (Desulfovibrio salexigens)).